We begin with the raw amino-acid sequence, 136 residues long: Large ribosomal subunit protein bL20 (136 aa).

The protein belongs to the bacterial ribosomal protein bL20 family.

Functionally, binds directly to 23S ribosomal RNA and is necessary for the in vitro assembly process of the 50S ribosomal subunit. It is not involved in the protein synthesizing functions of that subunit. The polypeptide is Large ribosomal subunit protein bL20 (Tropheryma whipplei (strain Twist) (Whipple's bacillus)).